We begin with the raw amino-acid sequence, 486 residues long: Ribulose bisphosphate carboxylase large chain, plasmid (486 aa).

Residues N126 and T176 each coordinate substrate. K178 functions as the Proton acceptor in the catalytic mechanism. Residue K180 participates in substrate binding. Residues K204, D206, and E207 each coordinate Mg(2+). The residue at position 204 (K204) is an N6-carboxylysine. The active-site Proton acceptor is H296. Substrate contacts are provided by R297, H329, and S381.

This sequence belongs to the RuBisCO large chain family. Type I subfamily. Heterohexadecamer of 8 large chains and 8 small chains. Mg(2+) serves as cofactor.

It carries out the reaction 2 (2R)-3-phosphoglycerate + 2 H(+) = D-ribulose 1,5-bisphosphate + CO2 + H2O. The enzyme catalyses D-ribulose 1,5-bisphosphate + O2 = 2-phosphoglycolate + (2R)-3-phosphoglycerate + 2 H(+). Its function is as follows. RuBisCO catalyzes two reactions: the carboxylation of D-ribulose 1,5-bisphosphate, the primary event in carbon dioxide fixation, as well as the oxidative fragmentation of the pentose substrate. Both reactions occur simultaneously and in competition at the same active site. The sequence is that of Ribulose bisphosphate carboxylase large chain, plasmid (cbbL2) from Cupriavidus necator (strain ATCC 17699 / DSM 428 / KCTC 22496 / NCIMB 10442 / H16 / Stanier 337) (Ralstonia eutropha).